The chain runs to 971 residues: Endoplasmic reticulum calcium ATPase srcA (971 aa).

At 1-25 the chain is on the cytoplasmic side; that stretch reads MNNEALAEDPPTPLWELVLEQFKDQ. The helical transmembrane segment at 26-46 threads the bilayer; the sequence is LVLILLGSAAVSFVLALFEEG. At 47–49 the chain is on the lumenal side; that stretch reads DDW. A helical membrane pass occupies residues 50-70; the sequence is TAFVDPVVILTILILNAVVGV. The Cytoplasmic portion of the chain corresponds to 71-217; it reads TQESSAEKAI…PTPLKQKLND (147 aa). Residues 218 to 238 traverse the membrane as a helical segment; it reads FGDMLAKVITVICVLVWLINV. At 239 to 262 the chain is on the lumenal side; sequence EHFNDPAHGGWAKGAIYYLKIAVS. A helical transmembrane segment spans residues 263–283; the sequence is LGVAAIPEGLAVVITTCLALG. Ca(2+)-binding residues include V265, A266, I268, and E270. The Cytoplasmic segment spans residues 284-718; that stretch reads TRKMAAKNAV…GRSIYSNTQQ (435 aa). Residue D312 is the 4-aspartylphosphate intermediate of the active site. Positions 312 and 314 each coordinate Mg(2+). Residues T314, E402, R453, K473, R518, R637, and K643 each contribute to the ATP site. Mg(2+) is bound at residue D662. N665 provides a ligand contact to ATP. The chain crosses the membrane as a helical span at residues 719 to 741; it reads FIRYLISSNIGEVVSIFLTAALG. Positions 727 and 730 each coordinate Ca(2+). The Lumenal segment spans residues 742-750; it reads MPEALIPVQ. A helical transmembrane segment spans residues 751-770; that stretch reads LLWVNLVTDGLPATALSFNP. Ca(2+) contacts are provided by N755, T758, and D759. Residues 771-795 are Cytoplasmic-facing; that stretch reads PDHDVMRRAPRKRDEPLVGGWLLFR. A helical membrane pass occupies residues 796-816; that stretch reads YLAIGTYVGAATVFGYIWWFV. At 817–854 the chain is on the lumenal side; the sequence is YNPEGPQISFWQLSHFHKCSAQFPEIGCEMFSNEMSRS. A helical transmembrane segment spans residues 855–875; the sequence is ASTVSLSILVVIEMLNAMNAL. Position 867 (E867) interacts with Ca(2+). The Cytoplasmic segment spans residues 876 to 891; that stretch reads SSSESLLAFPLWNNMM. Residues 892-912 traverse the membrane as a helical segment; it reads LVYAIILSMTLHFAILYIPFL. Residues 913 to 917 lie on the Lumenal side of the membrane; that stretch reads QTLFS. Residues 918–938 traverse the membrane as a helical segment; the sequence is ILPLNWTEWKAVLAISAPVVA. Residues 939–971 are Cytoplasmic-facing; it reads IDELLKYAERRLYTLPAIAGEQQNGVAFKPKKA.

Belongs to the cation transport ATPase (P-type) (TC 3.A.3) family. The cofactor is Mg(2+).

Its subcellular location is the endoplasmic reticulum membrane. The enzyme catalyses Ca(2+)(in) + ATP + H2O = Ca(2+)(out) + ADP + phosphate + H(+). Functionally, magnesium-dependent enzyme catalyzes the hydrolysis of ATP coupled with the translocation of calcium from the cytosol to the endoplasmic reticulum lumen. Its activity is coupled to the unfolded protein response (UPR) and Ca(2+) import into the endoplasmioc reticulum is important for redox homeostasis, virulence, cell wall biosynthesis, and resistance to antifungal compounds that inhibit Ca2+ signaling. With pmrA, promotes radial growth and conidiation. The polypeptide is Endoplasmic reticulum calcium ATPase srcA (srcA) (Aspergillus fumigatus (strain ATCC MYA-4609 / CBS 101355 / FGSC A1100 / Af293) (Neosartorya fumigata)).